Consider the following 377-residue polypeptide: Probable purine permease 22 (377 aa).

Helical transmembrane passes span 39 to 59, 71 to 91, 107 to 127, 128 to 148, 166 to 186, 202 to 222, 238 to 258, 283 to 303, 309 to 329, and 338 to 358; these read WLRV…ATVL, TYVV…FRFF, SPSF…VSAY, AYLS…LILA, FTPL…LLVV, VIGF…LSLI, VLDL…IGLF, TLAS…GLIF, FSNS…VIVF, and IFSI…HYLD.

This sequence belongs to the purine permeases (TC 2.A.7.14) family.

Its subcellular location is the membrane. The sequence is that of Probable purine permease 22 (PUP22) from Arabidopsis thaliana (Mouse-ear cress).